A 129-amino-acid chain; its full sequence is Ribulose bisphosphate carboxylase small subunit (129 aa).

Positions 109 to 129 are disordered; the sequence is LRMTRTESNGRSQHYMWETQR.

Belongs to the RuBisCO small chain family. As to quaternary structure, heterohexadecamer of 8 large and 8 small subunits.

Functionally, ruBisCO catalyzes two reactions: the carboxylation of D-ribulose 1,5-bisphosphate, the primary event in carbon dioxide fixation, as well as the oxidative fragmentation of the pentose substrate. Both reactions occur simultaneously and in competition at the same active site. Although the small subunit is not catalytic it is essential for maximal activity. In Rhizobium meliloti (strain 1021) (Ensifer meliloti), this protein is Ribulose bisphosphate carboxylase small subunit.